Reading from the N-terminus, the 589-residue chain is Intermediate filament protein B (589 aa).

The interval 1–84 (SLKQSQESSE…LEATDKEKKE (84 aa)) is head. In terms of domain architecture, IF rod spans 81–433 (EKKEMQGLND…KMLEGEESRV (353 aa)). Positions 85–116 (MQGLNDRLGNYIDRVKKLEEQNRKLVADLDEL) are coil 1A. The linker 1 stretch occupies residues 117–130 (RGRWGKDTSEIKIQ). The tract at residues 131–268 (YSDSLRDARK…RVHEQEVKEL (138 aa)) is coil 1B. The tract at residues 269 to 285 (QALLAQAPADTREFFKN) is linker 12. The tract at residues 286–433 (ELALAIRDIK…KMLEGEESRV (148 aa)) is coil 2. The interval 434-589 (GLRQMVEQVV…HTQKTIQTGQ (156 aa)) is tail. Positions 446 to 470 (HSLQQQEDTDSTRNVRGEVSTKTTF) are disordered. In terms of domain architecture, LTD spans 466-584 (TKTTFQRSAK…DERATHTQKT (119 aa)).

This sequence belongs to the intermediate filament family. As to quaternary structure, a and B can form homopolymers. In terms of tissue distribution, giant body muscle cells.

Its subcellular location is the cytoplasm. This Ascaris suum (Pig roundworm) protein is Intermediate filament protein B.